Here is a 550-residue protein sequence, read N- to C-terminus: Carboxypeptidase Y homolog A (550 aa).

The N-terminal stretch at 1 to 18 is a signal peptide; sequence MKSLVLGLLVGSAIASGP. The propeptide occupies 19–131; sequence LQHVLHAPPD…KLSQYDLRIK (113 aa). Residues 20–39 are disordered; that stretch reads QHVLHAPPDPEPKPEPEPQV. 5 cysteine pairs are disulfide-bonded: Cys185-Cys424, Cys319-Cys333, Cys343-Cys366, Cys350-Cys359, and Cys388-Cys394. Residues Asn203 and Asn216 are each glycosylated (N-linked (GlcNAc...) asparagine). Ser272 is an active-site residue. A glycan (N-linked (GlcNAc...) asparagine) is linked at Asn289. Residue Asn387 is glycosylated (N-linked (GlcNAc...) asparagine). Asp463 is a catalytic residue. 2 N-linked (GlcNAc...) asparagine glycosylation sites follow: Asn493 and Asn514. His525 is an active-site residue.

This sequence belongs to the peptidase S10 family.

The protein localises to the vacuole. The enzyme catalyses Release of a C-terminal amino acid with broad specificity.. Functionally, vacuolar carboxypeptidase involved in degradation of small peptides. Digests preferentially peptides containing an aliphatic or hydrophobic residue in P1' position, as well as methionine, leucine or phenylalanine in P1 position of ester substrate. In Paracoccidioides brasiliensis (strain Pb18), this protein is Carboxypeptidase Y homolog A (CPYA).